A 311-amino-acid chain; its full sequence is ATP synthase gamma chain (311 aa).

It belongs to the ATPase gamma chain family. In terms of assembly, F-type ATPases have 2 components, CF(1) - the catalytic core - and CF(0) - the membrane proton channel. CF(1) has five subunits: alpha(3), beta(3), gamma(1), delta(1), epsilon(1). CF(0) has three main subunits: a, b and c.

It localises to the cell membrane. Produces ATP from ADP in the presence of a proton gradient across the membrane. The gamma chain is believed to be important in regulating ATPase activity and the flow of protons through the CF(0) complex. The polypeptide is ATP synthase gamma chain (Limosilactobacillus fermentum (strain NBRC 3956 / LMG 18251) (Lactobacillus fermentum)).